The sequence spans 1391 residues: Axoneme-associated protein mst101(2) (1391 aa).

Disordered regions lie at residues 170 to 213 (ECNQ…GKKL) and 280 to 300 (SSEP…EKEL). Residues 184–201 (TKKGKTKGKSGGGNKKRS) are compositionally biased toward basic residues. Residues 291-300 (KNDEKKEKEL) are compositionally biased toward basic and acidic residues. 59 repeat units span residues 332-347 (KKKC…EEAE), 348-363 (KKKC…EEDE), 364-379 (KKAC…EADE), 380-395 (KKKC…KAAE), 396-411 (KKKC…EAAE), 412-427 (KKKC…EAAE), 428-443 (RKKC…KAAE), 444-459 (KKKC…EAAE), 460-475 (RKKC…KAAE), 476-491 (KKKC…EVAE), 492-507 (RKKC…KAEI), 508-523 (KKKC…ETAE), 524-539 (KKKC…EAAE), 540-555 (KKKC…EAAE), 556-571 (KKKC…EAAE), 572-587 (KKKC…EAAE), 588-603 (KKKC…EVAE), 604-619 (RKKC…KAAE), 620-635 (KKKC…EAAE), 636-651 (REKC…KAAE), 652-667 (KKKC…ETAE), 668-683 (KKKC…EAAE), 684-699 (KKKC…EAAE), 700-715 (KKKC…EAAE), 716-731 (RKKC…KAAE), 732-747 (KKKC…AGEK), 748-763 (NKLK…ALKE), 764-779 (KKKC…AEKK), 780-795 (KCKE…AEKK), 796-811 (KCEK…AEKK), 812-827 (KCEK…AEKK), 828-843 (KCEK…AEKK), 844-859 (KCEK…AEKK), 860-875 (KCEK…AEKK), 876-891 (KCEK…AEKK), 892-907 (KCAE…AEKK), 908-923 (KCEE…AERK), 924-939 (KCEE…AEKK), 940-955 (KCKK…GEKN), 956-971 (KLKK…CKKL), 972-987 (GKKS…CAEA), 988-1003 (AKKE…CEER), 1004-1019 (AKKQ…CEER), 1020-1035 (AKKL…CEER), 1036-1051 (AKKL…CEER), 1052-1067 (AKKL…CEER), 1068-1083 (AKKL…CEER), 1084-1099 (AKKE…CEER), 1100-1115 (AKKL…CEER), 1116-1131 (AKKE…CEEA), 1132-1147 (AKRE…CAEA), 1148-1163 (AKKE…CAEA), 1164-1179 (AKKE…CAEA), 1180-1195 (AKRE…CADL), 1196-1211 (AKKE…CEEA), 1212-1227 (AKKE…CAKA), 1228-1243 (AKKE…CAEA), 1244-1259 (AKKE…CAEA), and 1260-1275 (AKKE…CEKA). Residues 332–1275 (KKKCKDLGRK…AEKKRKCEKA (944 aa)) form a 59 X 16 AA approximate tandem repeats of [KR]-K-X-C-X-X-X-A-K-X-X-K-X-X-X-E region. Residues 370 to 429 (LAKKKKEADEKKKCEEAANKEKKAAEKKKCEKAAKERKEAAEKKKCEEAAKKEKEAAERK) form a disordered region. A disordered region spans residues 516–577 (KKEKETAEKK…EAAEKKKCEK (62 aa)). A compositionally biased stretch (basic and acidic residues) spans 517–577 (KEKETAEKKK…EAAEKKKCEK (61 aa)). The segment covering 729 to 765 (AAEKKKCKKLAKKKKAGEKNKLKKGNKKGKKALKEKK) has biased composition (basic residues). Disordered stretches follow at residues 729–881 (AAEK…EKAA), 900–922 (EKEL…VAER), and 934–1013 (KAAE…AAEK). The span at 766–881 (KCRELAKKKA…AEKKKCEKAA (116 aa)) shows a compositional bias: basic and acidic residues. 2 stretches are compositionally biased toward basic residues: residues 934 to 949 (KAAE…KKEK) and 956 to 976 (KLKK…KKSK). Residues 977–1013 (RAAEKKKCAEAAKKEKEAATKKKCEERAKKQKEAAEK) show a composition bias toward basic and acidic residues. Disordered regions lie at residues 1076-1095 (EKKQ…EKKQ) and 1104-1212 (KEAA…EEAA). Positions 1353-1370 (KKEKEAAEKKKRCKDLAK) are enriched in basic and acidic residues. Residues 1353 to 1391 (KKEKEAAEKKKRCKDLAKNKKKGHKKKGRNENRKKRTDC) form a disordered region. A compositionally biased stretch (basic residues) spans 1371–1391 (NKKKGHKKKGRNENRKKRTDC).

Testis. Primary spermatocytes and early spermatids.

The protein localises to the cytoplasm. Functionally, possible structural role in the sperm tail. The sequence is that of Axoneme-associated protein mst101(2) (mst101(2)) from Drosophila hydei (Fruit fly).